A 175-amino-acid chain; its full sequence is Avenin-like a3 (175 aa).

A signal peptide spans 1-19 (MKTMFLLALLAFTATSAVA).

This sequence belongs to the prolamin family. Contains 7 disulfide bonds.

Seed storage protein. Not integrated in the gluten polymer through disulfide bonds, unless incorporated by reduction and reoxidation during dough making. Increases dough strength and bread volume, but decreases dough stability when added into a base wheat flour. The polypeptide is Avenin-like a3 (Triticum aestivum (Wheat)).